An 834-amino-acid polypeptide reads, in one-letter code: Enhancer of filamentation 1 (834 aa).

A required for interaction with ITCH region spans residues 1–505 (MKYKNLMARA…HQILSQTSHD (505 aa)). An SH3 domain is found at 3–65 (YKNLMARALY…PGNRVKLLIG (63 aa)). 7 positions are modified to phosphotyrosine; by ABL1: Y92, Y164, Y166, Y177, Y189, Y214, and Y223. The interacts strongly with spindle-regulatory protein D1M1 stretch occupies residues 102-229 (RDTIYQVPPS…KGVYAIPPSA (128 aa)). The tract at residues 238–260 (EKDYDFPPPMRQAGRPDLRPEGV) is disordered. Phosphotyrosine; by ABL1 is present on Y279. A disordered region spans residues 291–316 (ARRHQSLSPNHPPPQLGQSVGSQNDA). S296 carries the phosphoserine modification. Polar residues predominate over residues 306 to 315 (LGQSVGSQND). Y317 is subject to Phosphotyrosine; by ABL1. Disordered regions lie at residues 328 to 398 (PPAE…SPAQ) and 560 to 623 (GPGS…GSER). Residues 332–344 (TSEKANPQERDGV) show a composition bias toward basic and acidic residues. The interacts with CTTN stretch occupies residues 351 to 834 (NPPDAKGSRD…KRSLLEMATF (484 aa)). The Caspase cleavage related site signature appears at 360 to 363 (DLVD). S369 is subject to Phosphoserine. Positions 369 to 395 (SFSSTGSTRSNMSTSSTSSKESSLSAS) are enriched in low complexity. A divergent helix-loop-helix motif region spans residues 710 to 760 (FYYDQCETHFISLLNAIDALFSCVSSAQPPRIFVAHSKFVILSAHKLVFIG). Positions 710–834 (FYYDQCETHF…KRSLLEMATF (125 aa)) are required for interaction with PLK1. A Phosphoserine; by CSNK1D and CSNK1E modification is found at S780. T804 carries the post-translational modification Phosphothreonine; by CSNK1E.

This sequence belongs to the CAS family. Homodimer. Forms heterodimers with BCAR1/p130cas. Forms complexes with PTK2B/RAFTK, adapter protein CRKL and LYN kinase. Part of a complex composed of NEDD9, AURKA and CTTN; within the complex NEDD9 acts as a scaffold protein and is required for complex formation. Part of a ternary complex composed of SMAD3, ITCH/AIP4 and NEDD9/HEF1; within the complex NEDD9/HEF1 interacts (via N-terminus) with ITCH/AIP4 (via WW domains); the complex mediates ubiquitination and proteasomal degradation of NEDD9/HEF1. Interacts with SMAD3; the interaction promotes NEDD9 ubiquitination and proteasomal degradation. Interacts with ID2. Interacts with CTTN (via N-terminus). Interacts with MICAL. Interacts with TXNL4/DIM1. Interacts with BCAR3 (via Ras-GEF domain). Interacts with SH2D3C isoform 1 and isoform 2. Interacts with ECT2. Interacts with PTPN11/SHP-2 (via SH2 domains); the interaction is enhanced when NEDD9/CAS-L is tyrosine phosphorylated. Interacts (via C-terminus) with PLK1 (via polo box domains). Interacts with NKX2-5. Interacts with SMAD3; the interaction is inhibited by oxidation of NEDD9. Interacts with NEDD9/HEF1; interaction is induced by CXCL12 promotion of ABL-mediated phosphorylation of NEDD9/HEF1. Interacts (via SH3 domain) with PTK2/FAK. Interacts with FYN; in the presence of PTK2. Interacts with INPPL1/SHIP2. Post-translationally, cell cycle-regulated processing produces four isoforms: p115, p105, p65, and p55. Isoform p115 arises from p105 phosphorylation and appears later in the cell cycle. Isoform p55 arises from p105 as a result of cleavage at a caspase cleavage-related site and it appears specifically at mitosis. The p65 isoform is poorly detected. Polyubiquitinated by ITCH/AIP4, leading to proteasomal degradation. In terms of processing, PTK2/FAK1 phosphorylates the protein at the YDYVHL motif (conserved among all cas proteins) following integrin stimulation. The SRC family kinases (FYN, SRC, LCK and CRK) are recruited to the phosphorylated sites and can phosphorylate other tyrosine residues. Ligation of either integrin beta-1 or B-cell antigen receptor on tonsillar B-cells and B-cell lines promotes tyrosine phosphorylation and both integrin and BCR-mediated tyrosine phosphorylation requires an intact actin network. Phosphorylation is required to recruit NEDD9 to T-cell receptor microclusters at the periphery of newly formed immunological synapses. In fibroblasts transformation with oncogene v-ABL results in an increase in tyrosine phosphorylation. Transiently phosphorylated following CD3 cross-linking and this phosphorylated form binds to CRKL and C3G. A mutant lacking the SH3 domain is phosphorylated upon CD3 cross-linking but not upon integrin beta-1 cross-linking. Tyrosine phosphorylation occurs upon stimulation of the G-protein coupled C1a calcitonin receptor. Calcitonin-stimulated tyrosine phosphorylation is mediated by calcium- and protein kinase C-dependent mechanisms and requires the integrity of the actin cytoskeleton. Phosphorylation at Ser-369 induces proteasomal degradation. Phosphorylated by LYN. Phosphorylation at Ser-780 by CSNK1D or CSNK1E, or phosphorylation of Thr-804 by CSNK1E enhances the interaction of NEDD9 with PLK1. Expressed in B-cells (at protein level). Expressed in the respiratory epithelium of the main bronchi to the bronchioles in the lungs (at protein level). High levels detected in kidney, lung, and placenta. Expressed in lymphocytes.

It localises to the cytoplasm. The protein resides in the cell cortex. It is found in the nucleus. Its subcellular location is the golgi apparatus. The protein localises to the cell projection. It localises to the lamellipodium. The protein resides in the cell junction. It is found in the focal adhesion. Its subcellular location is the cytoskeleton. The protein localises to the spindle pole. It localises to the cilium. The protein resides in the cilium basal body. It is found in the basolateral cell membrane. Its subcellular location is the spindle. Scaffolding protein which plays a central coordinating role for tyrosine-kinase-based signaling related to cell adhesion. As a focal adhesion protein, plays a role in embryonic fibroblast migration. May play an important role in integrin beta-1 or B cell antigen receptor (BCR) mediated signaling in B- and T-cells. Integrin beta-1 stimulation leads to recruitment of various proteins including CRKL and SHPTP2 to the tyrosine phosphorylated form. Promotes adhesion and migration of lymphocytes; as a result required for the correct migration of lymphocytes to the spleen and other secondary lymphoid organs. Plays a role in the organization of T-cell F-actin cortical cytoskeleton and the centralization of T-cell receptor microclusters at the immunological synapse. Negatively regulates cilia outgrowth in polarized cysts. Modulates cilia disassembly via activation of AURKA-mediated phosphorylation of HDAC6 and subsequent deacetylation of alpha-tubulin. Positively regulates RANKL-induced osteoclastogenesis. Required for the maintenance of hippocampal dendritic spines in the dentate gyrus and CA1 regions, thereby involved in spatial learning and memory. This is Enhancer of filamentation 1 from Homo sapiens (Human).